A 382-amino-acid chain; its full sequence is Mucosal addressin cell adhesion molecule 1 (382 aa).

Positions 1–18 (MDFGLALLLAGLLGLLLG) are cleaved as a signal peptide. Residues 19–317 (QSLQVKPLQV…TGSSKPAGDQ (299 aa)) lie on the Extracellular side of the membrane. 2 consecutive Ig-like domains span residues 23-112 (VKPL…LLVY) and 113-231 (AFPD…TSPE). Cystine bridges form between Cys47–Cys94, Cys51–Cys98, and Cys134–Cys204. Asn83 is a glycosylation site (N-linked (GlcNAc...) asparagine). The segment at 223–314 (VLHSPTSPEP…VIPTGSSKPA (92 aa)) is disordered. A mucin-like region spans residues 226 to 317 (SPTSPEPPDT…TGSSKPAGDQ (92 aa)). A 1; truncated repeat occupies 228–231 (TSPE). Residues 228 to 271 (TSPEPPDTTSPESPDTTSPESPDTTSQEPPDTTSPEPPDKTSPE) are 5.5 X 8 AA tandem repeats of [PS]-P-D-T-T-S-[QP]-E. 5 consecutive repeat copies span residues 232–239 (PPDTTSPE), 240–247 (SPDTTSPE), 248–255 (SPDTTSQE), 256–263 (PPDTTSPE), and 264–271 (PPDKTSPE). A compositionally biased stretch (low complexity) spans 236 to 261 (TSPESPDTTSPESPDTTSQEPPDTTS). A compositionally biased stretch (low complexity) spans 277–288 (GSTHTPRSPGST). The chain crosses the membrane as a helical span at residues 318 to 338 (LPAALWTSSAVLGLLLLALPT). Residues 339–382 (YHLWKRCRHLAEDDTHPPASLRLLPQVSAWAGLRGTGQVGISPS) are Cytoplasmic-facing.

As to quaternary structure, homodimer. In terms of processing, the Ser/Thr-rich mucin-like domain may provide possible sites for O-glycosylation. As to expression, highly expressed on high endothelial venules (HEV) and lamina propia venules found in the small intestine, and to a lesser extent in the colon and spleen. Very low levels of expression found in pancreas and brain. Not expressed in the thymus, prostate, ovaries, testis, heart, placenta, lung, liver, skeletal muscle, kidney or peripheral blood leukocytes.

It is found in the membrane. Cell adhesion leukocyte receptor expressed by mucosal venules, helps to direct lymphocyte traffic into mucosal tissues including the Peyer patches and the intestinal lamina propria. It can bind both integrin alpha-4/beta-7 and L-selectin, regulating both the passage and retention of leukocytes. Isoform 2, lacking the mucin-like domain, may be specialized in supporting integrin alpha-4/beta-7-dependent adhesion strengthening, independent of L-selectin binding. The protein is Mucosal addressin cell adhesion molecule 1 (MADCAM1) of Homo sapiens (Human).